A 522-amino-acid chain; its full sequence is Maturase K (522 aa).

Belongs to the intron maturase 2 family. MatK subfamily.

It is found in the plastid. It localises to the chloroplast. Functionally, usually encoded in the trnK tRNA gene intron. Probably assists in splicing its own and other chloroplast group II introns. This chain is Maturase K, found in Schizorhiza neglecta (Lapeirousia neglecta).